The primary structure comprises 448 residues: Late embryogenesis abundant protein ECP63 (448 aa).

Composition is skewed to basic and acidic residues over residues 282–326 (TEEA…EEAG) and 334–354 (QKTRESTESGAQKAEETKDSA). Disordered stretches follow at residues 282–360 (TEEA…RGNE) and 411–448 (SKPGKVATSLKASDQMTGQTFNDVGRMDDDARKDKGKL). Positions 297–331 (KENMEKAGEVTRQKMEEMRLEGKELKEEAGAKAQE) form a coiled coil. Residues 420–432 (LKASDQMTGQTFN) show a composition bias toward polar residues. The segment covering 435 to 448 (GRMDDDARKDKGKL) has biased composition (basic and acidic residues).

This sequence belongs to the LEA type 4 family. As to expression, expressed in mature seeds.

In terms of biological role, may be involved in the BHLH109-mediated regulation of somatic embryogenesis. This Arabidopsis thaliana (Mouse-ear cress) protein is Late embryogenesis abundant protein ECP63.